We begin with the raw amino-acid sequence, 589 residues long: MKRVRTEQIQMAVSCYLKRRQYVDSDGPLKQGLRLSQTAEEMAANLTVQSESGCANIVSAAPCQAEPQQYEVQFGRLRNFLTDSDSQHSHEVMPLLYPLFVYLHLNLVQNSPKSTVESFYSRFHGMFLQNASQKDVIEQLQTTQTIQDILSNFKLRAFLDNKYVVRLQEDSYNYLIRYLQSDNNTALCKVLTLHIHLDVQPAKRTDYQLYASGSSSRSENNGLEPPDMPSPILQNEAALEVLQESIKRVKDGPPSLTTICFYAFYNTEQLLNTAEISPDSKLLAAGFDNSCIKLWSLRSKKLKSEPHQVDVSRIHLACDILEEEDDEDDNAGTEMKILRGHCGPVYSTRFLADSSGLLSCSEDMSIRYWDLGSFTNTVLYQGHAYPVWDLDISPYSLYFASGSHDRTARLWSFDRTYPLRIYAGHLADVDCVKFHPNSNYLATGSTDKTVRLWSAQQGNSVRLFTGHRGPVLSLAFSPNGKYLASAGEDQRLKLWDLASGTLYKELRGHTDNITSLTFSPDSGLIASASMDNSVRVWDIRNTYCSAPADGSSSELVGVYTGQMSNVLSVQFMACNLLLVTGITQENQEH.

Over residues 211 to 221 the composition is skewed to polar residues; sequence ASGSSSRSENN. Residues 211–230 form a disordered region; the sequence is ASGSSSRSENNGLEPPDMPS. WD repeat units lie at residues 266–305, 340–379, 382–421, 424–463, 466–505, and 508–547; these read NTEQLLNTAEISPDSKLLAAGFDNSCIKLWSLRSKKLKSE, GHCGPVYSTRFLADSSGLLSCSEDMSIRYWDLGSFTNTVL, GHAYPVWDLDISPYSLYFASGSHDRTARLWSFDRTYPLRI, GHLADVDCVKFHPNSNYLATGSTDKTVRLWSAQQGNSVRL, GHRGPVLSLAFSPNGKYLASAGEDQRLKLWDLASGTLYKE, and GHTDNITSLTFSPDSGLIASASMDNSVRVWDIRNTYCSAP.

This sequence belongs to the WD repeat TAF5 family. In terms of assembly, the PCAF complex is composed of a number of TBP-associated factors (TAFS), such as TAF5, TAF5L, TAF6, TAF6L, TAF9, TAF10 and TAF12, PCAF, and also PCAF-associated factors (PAFs), such as TADA2L/ADA2, TADA3L/ADA3 and SPT3. Component of the STAGA transcription coactivator-HAT complex, at least composed of SUPT3H, GCN5L2, TAF5L, TAF6L, SUPT7L, TADA3L, TAD1L, TAF10, TAF12, TRRAP and TAF9.

The protein resides in the nucleus. Its function is as follows. Functions as a component of the PCAF complex. The PCAF complex is capable of efficiently acetylating histones in a nucleosomal context. The PCAF complex could be considered as the human version of the yeast SAGA complex. With TAF6L, acts as an epigenetic regulator essential for somatic reprogramming. Regulates target genes through H3K9ac deposition and MYC recruitment which trigger MYC regulatory network to orchestrate gene expression programs to control embryonic stem cell state. The sequence is that of TAF5-like RNA polymerase II p300/CBP-associated factor-associated factor 65 kDa subunit 5L from Homo sapiens (Human).